Reading from the N-terminus, the 1466-residue chain is ABC transporter G family member 10 (1466 aa).

Residues 23–45 (NTPQYENNNNNNNNTSGNESPNI) are compositionally biased toward low complexity. The segment at 23–47 (NTPQYENNNNNNNNTSGNESPNILN) is disordered. The ABC transporter 1 domain occupies 138–392 (VTIFNLFRPS…FLDLGFDCEP (255 aa)). Residues 497 to 724 (WGDRFALISK…NGSTMSYQDQ (228 aa)) enclose the ABC transmembrane type-2 1 domain. 6 helical membrane passes run 501 to 521 (FALI…ASLF), 537 to 557 (AIYA…GLTF), 586 to 606 (IPLT…MYGL), 611 to 631 (GKFF…VAFF), 641 to 661 (LYVS…YGGY), and 767 to 787 (IITF…LELF). In terms of domain architecture, ABC transporter 2 spans 838–1082 (FTWNHIHYTV…LTSYFERNGV (245 aa)). 874–881 (GSSGAGKT) contacts ATP. An ABC transmembrane type-2 2 domain is found at 1177–1399 (SYVYGIFTQA…LTCKEYFKPT (223 aa)). 6 consecutive transmembrane segments (helical) span residues 1178–1198 (YVYG…FTFW), 1214–1234 (IFEI…QFLI), 1253–1273 (FAIS…TICF), 1290–1310 (FYFY…GQVV), 1319–1339 (LAQT…GVLV), and 1440–1460 (YGIL…FVYL).

The protein belongs to the ABC transporter superfamily. ABCG family. PDR (TC 3.A.1.205) subfamily.

The protein resides in the membrane. The protein is ABC transporter G family member 10 (abcG10) of Dictyostelium discoideum (Social amoeba).